Reading from the N-terminus, the 148-residue chain is Nucleoside diphosphate kinase 1 (148 aa).

The ATP site is built by K9, F57, R85, T91, R102, and N112. Residue H115 is the Pros-phosphohistidine intermediate of the active site.

This sequence belongs to the NDK family. The cofactor is Mg(2+).

It catalyses the reaction a 2'-deoxyribonucleoside 5'-diphosphate + ATP = a 2'-deoxyribonucleoside 5'-triphosphate + ADP. The enzyme catalyses a ribonucleoside 5'-diphosphate + ATP = a ribonucleoside 5'-triphosphate + ADP. Major role in the synthesis of nucleoside triphosphates other than ATP. The ATP gamma phosphate is transferred to the NDP beta phosphate via a ping-pong mechanism, using a phosphorylated active-site intermediate. The protein is Nucleoside diphosphate kinase 1 (NDKP1) of Mesembryanthemum crystallinum (Common ice plant).